A 604-amino-acid chain; its full sequence is Prostaglandin G/H synthase 2 (604 aa).

Residues 1–17 (MLFRAVLLCAALGLSQA) form the signal peptide. An EGF-like domain is found at 18-55 (ANPCCSNPCQNRGECMSTGFDQYKCDCTRTGFYGENCT). 4 disulfides stabilise this stretch: cysteine 21/cysteine 32, cysteine 22/cysteine 145, cysteine 26/cysteine 42, and cysteine 44/cysteine 54. Residue asparagine 53 is glycosylated (N-linked (GlcNAc...) asparagine). Substrate is bound at residue arginine 106. Asparagine 130 is a glycosylation site (N-linked (GlcNAc...) asparagine). Catalysis depends on histidine 193, which acts as the Proton acceptor. Tyrosine 341 lines the substrate pocket. Tyrosine 371 (for cyclooxygenase activity) is an active-site residue. Heme b is bound at residue histidine 374. Asparagine 396 carries an N-linked (GlcNAc...) asparagine glycan. An S-nitrosocysteine modification is found at cysteine 526. An intrachain disulfide couples cysteine 555 to cysteine 561. Serine 565 bears the O-acetylserine; by SPHK1 mark. N-linked (GlcNAc...) asparagine glycosylation is present at asparagine 580.

This sequence belongs to the prostaglandin G/H synthase family. Homodimer. Heme b serves as cofactor. Post-translationally, S-nitrosylation by NOS2 (iNOS) activates enzyme activity. S-nitrosylation may take place on different Cys residues in addition to Cys-526. In terms of processing, acetylated at Ser-565 by SPHK1. During neuroinflammation, acetylation by SPHK1 promotes neuronal secretion of specialized preresolving mediators (SPMs), especially 15-R-lipoxin A4, which results in an increase of phagocytic microglia. As to expression, following colon injury, expressed in the wound bed mesenchyme during the first phase of repair, probably by colonic mesenchymal stem cells (at protein level).

The protein localises to the microsome membrane. Its subcellular location is the endoplasmic reticulum membrane. It localises to the nucleus inner membrane. It is found in the nucleus outer membrane. It carries out the reaction (5Z,8Z,11Z,14Z)-eicosatetraenoate + AH2 + 2 O2 = prostaglandin H2 + A + H2O. It catalyses the reaction (5Z,8Z,11Z,14Z)-eicosatetraenoate + 2 O2 = prostaglandin G2. The enzyme catalyses prostaglandin G2 + AH2 = prostaglandin H2 + A + H2O. The catalysed reaction is (5Z,8Z,11Z,14Z,17Z)-eicosapentaenoate + 2 O2 = prostaglandin G3. It carries out the reaction prostaglandin G3 + AH2 = prostaglandin H3 + A + H2O. It catalyses the reaction (8Z,11Z,14Z)-eicosatrienoate + 2 O2 = prostaglandin G1. The enzyme catalyses prostaglandin G1 + AH2 = prostaglandin H1 + A + H2O. The catalysed reaction is 2-(5Z,8Z,11Z,14Z)-eicosatetraenoyl-sn-glycero-3-phosphoethanolamine + 2 O2 = 2-(prostaglandin G2)-sn-glycero-3-phosphoethanolamine. It carries out the reaction 2-(prostaglandin G2)-sn-glycero-3-phosphoethanolamine + AH2 = 2-(prostaglandin H2)-sn-glycero-3-phosphoethanolamine + A + H2O. It catalyses the reaction 2-(5Z,8Z,11Z,14Z)-eicosatetraenoyl-sn-glycero-3-phosphocholine + 2 O2 = 2-(prostaglandin G2)-sn-glycero-3-phosphocholine. The enzyme catalyses 2-(prostaglandin G2)-sn-glycero-3-phosphocholine + AH2 = 2-(prostaglandin H2)-sn-glycero-3-phosphocholine + A + H2O. The catalysed reaction is (15S)-hydroperoxy-(5Z,8Z,11Z,13E)-eicosatetraenoate + AH2 = (15S)-hydroxy-(5Z,8Z,11Z,13E)-eicosatetraenoate + A + H2O. It carries out the reaction 2-(5Z,8Z,11Z,14Z)-eicosatetraenoyl-sn-glycero-3-phosphocholine + AH2 + O2 = 2-[(15S)-hydroxy-(5Z,8Z,11Z,13E)-eicosatetraenoyl]-sn-glycero-3-phosphocholine + A + H2O. It catalyses the reaction 2-(5Z,8Z,11Z,14Z)-eicosatetraenoyl-sn-glycero-3-phosphocholine + AH2 + O2 = 2-[(15R)-hydroxy-(5Z,8Z,11Z,13E)-eicosatetraenoyl]-sn-glycero-3-phosphocholine + A + H2O. The enzyme catalyses 2-(5Z,8Z,11Z,14Z)-eicosatetraenoyl-sn-glycero-3-phosphocholine + AH2 + O2 = 2-[(11R)-hydroxy-(5Z,8Z,12E,14Z)-eicosatetraenoyl]-sn-glycero-3-phosphocholine + A + H2O. The catalysed reaction is (9Z,12Z)-octadecadienoate + AH2 + O2 = 9-hydroxy-(10E,12Z)-octadecadienoate + A + H2O. It carries out the reaction (9Z,12Z)-octadecadienoate + AH2 + O2 = 13-hydroxy-(9Z,11E)-octadecadienoate + A + H2O. It catalyses the reaction (5Z,8Z,11Z,14Z)-eicosatetraenoate + AH2 + O2 = (15R)-hydroxy-(5Z,8Z,11Z,13E)-eicosatetraenoate + A + H2O. The enzyme catalyses (5Z,8Z,11Z,14Z)-eicosatetraenoate + AH2 + O2 = (11R)-hydroxy-(5Z,8Z,12E,14Z)-eicosatetraenoate + A + H2O. The catalysed reaction is (5Z,8Z,11Z,14Z,17Z)-eicosapentaenoate + AH2 + O2 = (11R)-hydroxy-(5Z,8Z,12E,14Z,17Z)-eicosapentaenoate + A + H2O. It carries out the reaction (5Z,8Z,11Z,14Z,17Z)-eicosapentaenoate + AH2 + O2 = (18S)-hydroxy-(5Z,8Z,11Z,14Z,16E)-eicosapentaenoate + A + H2O. It catalyses the reaction (5Z,8Z,11Z,14Z,17Z)-eicosapentaenoate + AH2 + O2 = (18R)-hydroxy-(5Z,8Z,11Z,14Z,16E)-eicosapentaenoate + A + H2O. The enzyme catalyses (5Z,8Z,11Z,14Z,17Z)-eicosapentaenoate + AH2 + O2 = (15R)-hydroxy-(5Z,8Z,11Z,13E,17Z)-eicosapentaenoate + A + H2O. The catalysed reaction is (5Z,8Z,11Z,14Z,17Z)-eicosapentaenoate + AH2 + O2 = (15S)-hydroxy-(5Z,8Z,11Z,13E,17Z)-eicosapentaenoate + A + H2O. It carries out the reaction (7Z,10Z,13Z,16Z,19Z)-docosapentaenoate + AH2 + O2 = 13R-hydroxy-(7Z,10Z,14E,16Z,19Z)-docosapentaenoate + A + H2O. It catalyses the reaction (4Z,7Z,10Z,13Z,16Z,19Z)-docosahexaenoate + AH2 + O2 = 13-hydroxy-(4Z,7Z,10Z,14E,16Z,19Z)-docosahexaenoate + A + H2O. The enzyme catalyses (5S)-hydroxy-(6E,8Z,11Z,14Z)-eicosatetraenoate + AH2 + O2 = (5S,15R)-dihydroxy-(6E,8Z,11Z,13E)-eicosatetraenoate + A + H2O. The catalysed reaction is (4Z,7Z,10Z,13Z,16Z,19Z)-docosahexaenoate + AH2 + O2 = 17R-hydroxy-(4Z,7Z,10Z,13Z,15E,19Z)-docosahexaenoate + A + H2O. It carries out the reaction (5S)-hydroxy-(6E,8Z,11Z,14Z)-eicosatetraenoate + AH2 + O2 = (5S,15S)-dihydroxy-(6E,8Z,11Z,13E)-eicosatetraenoate + A + H2O. It catalyses the reaction (5S)-hydroxy-(6E,8Z,11Z,14Z)-eicosatetraenoate + AH2 + O2 = (5S,11R)-dihydroxy-(6E,8Z,12E,14Z)-eicosatetraenoate + A + H2O. The enzyme catalyses 2-(5Z,8Z,11Z,14Z-eicosatetraenoyl)-glycerol + 2 O2 = 2-glyceryl-prostaglandin G2. The catalysed reaction is 2-glyceryl-prostaglandin G2 + AH2 = 2-glyceryl-prostaglandin H2 + A + H2O. It carries out the reaction (5Z,8Z,11Z,14Z)-eicosatetraenoate + O2 = (15R)-hydroperoxy-(5Z,8Z,11Z,13E)-eicosatetraenoate. It catalyses the reaction (5Z,8Z,11Z,14Z)-eicosatetraenoate + O2 = 11R-hydroperoxy-(5Z,8Z,12E,14Z)-eicosatetraenoate. The enzyme catalyses (9Z,12Z)-octadecadienoate + AH2 + O2 = (9R)-hydroxy-(10E,12Z)-octadecadienoate + A + H2O. The catalysed reaction is (9Z,12Z)-octadecadienoate + AH2 + O2 = (9S)-hydroxy-(10E,12Z)-octadecadienoate + A + H2O. It carries out the reaction (9Z,12Z)-octadecadienoate + AH2 + O2 = (13S)-hydroxy-(9Z,11E)-octadecadienoate + A + H2O. It catalyses the reaction (9Z,12Z)-octadecadienoate + AH2 + O2 = (13R)-hydroxy-(9Z,11E)-octadecadienoate + A + H2O. It functions in the pathway lipid metabolism; prostaglandin biosynthesis. Its activity is regulated as follows. Inhibited by the nonsteroidal anti-inflammatory drugs aspirin, naproxen, diclofenac, meclofenamic acid, indomethacin and their analogs. Functionally, dual cyclooxygenase and peroxidase in the biosynthesis pathway of prostanoids, a class of C20 oxylipins mainly derived from arachidonate, with a particular role in the inflammatory response. The cyclooxygenase activity oxygenates arachidonate (AA, C20:4(n-6)) to the hydroperoxy endoperoxide prostaglandin G2 (PGG2), and the peroxidase activity reduces PGG2 to the hydroxy endoperoxide PGH2, the precursor of all 2-series prostaglandins and thromboxanes. This complex transformation is initiated by abstraction of hydrogen at carbon 13 (with S-stereochemistry), followed by insertion of molecular O2 to form the endoperoxide bridge between carbon 9 and 11 that defines prostaglandins. The insertion of a second molecule of O2 (bis-oxygenase activity) yields a hydroperoxy group in PGG2 that is then reduced to PGH2 by two electrons. Similarly catalyzes successive cyclooxygenation and peroxidation of dihomo-gamma-linoleate (DGLA, C20:3(n-6)) and eicosapentaenoate (EPA, C20:5(n-3)) to corresponding PGH1 and PGH3, the precursors of 1- and 3-series prostaglandins. In an alternative pathway of prostanoid biosynthesis, converts 2-arachidonoyl lysophopholipids to prostanoid lysophopholipids, which are then hydrolyzed by intracellular phospholipases to release free prostanoids. Metabolizes 2-arachidonoyl glycerol yielding the glyceryl ester of PGH2, a process that can contribute to pain response. Generates lipid mediators from n-3 and n-6 polyunsaturated fatty acids (PUFAs) via a lipoxygenase-type mechanism. Oxygenates PUFAs to hydroperoxy compounds and then reduces them to corresponding alcohols. Plays a role in the generation of resolution phase interaction products (resolvins) during both sterile and infectious inflammation. Metabolizes docosahexaenoate (DHA, C22:6(n-3)) to 17R-HDHA, a precursor of the D-series resolvins (RvDs). As a component of the biosynthetic pathway of E-series resolvins (RvEs), converts eicosapentaenoate (EPA, C20:5(n-3)) primarily to 18S-HEPE that is further metabolized by ALOX5 and LTA4H to generate 18S-RvE1 and 18S-RvE2. In vascular endothelial cells, converts docosapentaenoate (DPA, C22:5(n-3)) to 13R-HDPA, a precursor for 13-series resolvins (RvTs) shown to activate macrophage phagocytosis during bacterial infection. In activated leukocytes, contributes to oxygenation of hydroxyeicosatetraenoates (HETE) to diHETES (5,15-diHETE and 5,11-diHETE). Can also use linoleate (LA, (9Z,12Z)-octadecadienoate, C18:2(n-6)) as substrate and produce hydroxyoctadecadienoates (HODEs) in a regio- and stereospecific manner, being (9R)-HODE ((9R)-hydroxy-(10E,12Z)-octadecadienoate) and (13S)-HODE ((13S)-hydroxy-(9Z,11E)-octadecadienoate) its major products. During neuroinflammation, plays a role in neuronal secretion of specialized preresolving mediators (SPMs) 15R-lipoxin A4 that regulates phagocytic microglia. The chain is Prostaglandin G/H synthase 2 from Mus musculus (Mouse).